A 373-amino-acid chain; its full sequence is UDP-N-acetylglucosamine--N-acetylmuramyl-(pentapeptide) pyrophosphoryl-undecaprenol N-acetylglucosamine transferase (373 aa).

Residues 13–15 (TGG), N124, R164, S192, and Q293 each bind UDP-N-acetyl-alpha-D-glucosamine.

Belongs to the glycosyltransferase 28 family. MurG subfamily.

The protein resides in the cell inner membrane. It catalyses the reaction di-trans,octa-cis-undecaprenyl diphospho-N-acetyl-alpha-D-muramoyl-L-alanyl-D-glutamyl-meso-2,6-diaminopimeloyl-D-alanyl-D-alanine + UDP-N-acetyl-alpha-D-glucosamine = di-trans,octa-cis-undecaprenyl diphospho-[N-acetyl-alpha-D-glucosaminyl-(1-&gt;4)]-N-acetyl-alpha-D-muramoyl-L-alanyl-D-glutamyl-meso-2,6-diaminopimeloyl-D-alanyl-D-alanine + UDP + H(+). It participates in cell wall biogenesis; peptidoglycan biosynthesis. Functionally, cell wall formation. Catalyzes the transfer of a GlcNAc subunit on undecaprenyl-pyrophosphoryl-MurNAc-pentapeptide (lipid intermediate I) to form undecaprenyl-pyrophosphoryl-MurNAc-(pentapeptide)GlcNAc (lipid intermediate II). This is UDP-N-acetylglucosamine--N-acetylmuramyl-(pentapeptide) pyrophosphoryl-undecaprenol N-acetylglucosamine transferase from Allorhizobium ampelinum (strain ATCC BAA-846 / DSM 112012 / S4) (Agrobacterium vitis (strain S4)).